The chain runs to 439 residues: GTPase Der (439 aa).

EngA-type G domains lie at 4-168 and 177-352; these read PIVA…KDDE and INIA…DNYT. GTP-binding positions include 10-17, 57-61, 120-123, 183-190, 230-234, and 295-298; these read GRPNVGKS, DTGGI, NKID, GKPNVGKS, DTAGL, and NKWD. Residues 353-437 form the KH-like domain; sequence KRVKTGVLND…GIKLEFRERK (85 aa).

It belongs to the TRAFAC class TrmE-Era-EngA-EngB-Septin-like GTPase superfamily. EngA (Der) GTPase family. As to quaternary structure, associates with the 50S ribosomal subunit.

In terms of biological role, GTPase that plays an essential role in the late steps of ribosome biogenesis. This chain is GTPase Der, found in Clostridium botulinum (strain Okra / Type B1).